Consider the following 514-residue polypeptide: Endoglucanase MaCel5A (514 aa).

The N-terminal stretch at M1 to A23 is a signal peptide. 2 stretches are compositionally biased toward low complexity: residues G91 to G114 and S179 to G201. Disordered regions lie at residues G91–G118 and S179–S208. Catalysis depends on E346, which acts as the Proton donor. E439 functions as the Nucleophile in the catalytic mechanism.

This sequence belongs to the glycosyl hydrolase 5 (cellulase A) family.

The catalysed reaction is Endohydrolysis of (1-&gt;4)-beta-D-glucosidic linkages in cellulose, lichenin and cereal beta-D-glucans.. Its activity is regulated as follows. Exhibits strong halostability and halotolerance. The activity increases about tenfold in the presence of 0.5 M NaCl, and about fivefold in the presence of 4.0 M NaCl. Tolerates detergents, but activity is decreased in the presence of EDTA. Activity is enhanced in the presence of Mn(2+), Ca(2+), Ba(2+) or Mg(2+), and decreased in the presence of Zn(2+), Cu(2+), Al(3+) or Fe(3+). Functionally, endoglucanase that exhibits highest activity toward barley beta-glucan, lower activity toward carboxymethyl cellulose (CMC-Na), and marginal activity toward laminarin and xylan. In Microbulbifer sp. (strain ALW1), this protein is Endoglucanase MaCel5A.